Reading from the N-terminus, the 480-residue chain is Glutamate--tRNA ligase (480 aa).

The 'HIGH' region motif lies at 21 to 31; the sequence is PSPTGYLHVGG. 4 residues coordinate Zn(2+): Cys110, Cys112, Cys137, and His139. Positions 248-252 match the 'KMSKS' region motif; sequence KLSKR. Residue Lys251 coordinates ATP.

This sequence belongs to the class-I aminoacyl-tRNA synthetase family. Glutamate--tRNA ligase type 1 subfamily. As to quaternary structure, monomer. Requires Zn(2+) as cofactor.

It is found in the cytoplasm. The catalysed reaction is tRNA(Glu) + L-glutamate + ATP = L-glutamyl-tRNA(Glu) + AMP + diphosphate. Its function is as follows. Catalyzes the attachment of glutamate to tRNA(Glu) in a two-step reaction: glutamate is first activated by ATP to form Glu-AMP and then transferred to the acceptor end of tRNA(Glu). This chain is Glutamate--tRNA ligase, found in Histophilus somni (strain 129Pt) (Haemophilus somnus).